A 1186-amino-acid chain; its full sequence is DNA-directed RNA polymerase subunit beta (1186 aa).

Residues 1149-1186 (KEEDDDPSTSSDDLGFNIGARPDAAAKEDQVAEEPEFQ) are disordered.

This sequence belongs to the RNA polymerase beta chain family. In terms of assembly, the RNAP catalytic core consists of 2 alpha, 1 beta, 1 beta' and 1 omega subunit. When a sigma factor is associated with the core the holoenzyme is formed, which can initiate transcription.

It catalyses the reaction RNA(n) + a ribonucleoside 5'-triphosphate = RNA(n+1) + diphosphate. Its function is as follows. DNA-dependent RNA polymerase catalyzes the transcription of DNA into RNA using the four ribonucleoside triphosphates as substrates. This chain is DNA-directed RNA polymerase subunit beta, found in Bifidobacterium adolescentis (strain ATCC 15703 / DSM 20083 / NCTC 11814 / E194a).